The following is a 309-amino-acid chain: 4-hydroxy-3-methylbut-2-enyl diphosphate reductase (309 aa).

Cys-12 is a [4Fe-4S] cluster binding site. Residues His-41 and His-74 each coordinate (2E)-4-hydroxy-3-methylbut-2-enyl diphosphate. Dimethylallyl diphosphate-binding residues include His-41 and His-74. Isopentenyl diphosphate is bound by residues His-41 and His-74. Cys-96 serves as a coordination point for [4Fe-4S] cluster. Residue His-124 participates in (2E)-4-hydroxy-3-methylbut-2-enyl diphosphate binding. Position 124 (His-124) interacts with dimethylallyl diphosphate. Residue His-124 coordinates isopentenyl diphosphate. Glu-126 functions as the Proton donor in the catalytic mechanism. Thr-167 contributes to the (2E)-4-hydroxy-3-methylbut-2-enyl diphosphate binding site. Cys-197 is a binding site for [4Fe-4S] cluster. (2E)-4-hydroxy-3-methylbut-2-enyl diphosphate is bound by residues Ser-225, Ser-226, Asn-227, and Ser-269. Dimethylallyl diphosphate-binding residues include Ser-225, Ser-226, Asn-227, and Ser-269. Isopentenyl diphosphate contacts are provided by Ser-225, Ser-226, Asn-227, and Ser-269.

Belongs to the IspH family. The cofactor is [4Fe-4S] cluster.

It catalyses the reaction isopentenyl diphosphate + 2 oxidized [2Fe-2S]-[ferredoxin] + H2O = (2E)-4-hydroxy-3-methylbut-2-enyl diphosphate + 2 reduced [2Fe-2S]-[ferredoxin] + 2 H(+). The enzyme catalyses dimethylallyl diphosphate + 2 oxidized [2Fe-2S]-[ferredoxin] + H2O = (2E)-4-hydroxy-3-methylbut-2-enyl diphosphate + 2 reduced [2Fe-2S]-[ferredoxin] + 2 H(+). It functions in the pathway isoprenoid biosynthesis; dimethylallyl diphosphate biosynthesis; dimethylallyl diphosphate from (2E)-4-hydroxy-3-methylbutenyl diphosphate: step 1/1. Its pathway is isoprenoid biosynthesis; isopentenyl diphosphate biosynthesis via DXP pathway; isopentenyl diphosphate from 1-deoxy-D-xylulose 5-phosphate: step 6/6. Functionally, catalyzes the conversion of 1-hydroxy-2-methyl-2-(E)-butenyl 4-diphosphate (HMBPP) into a mixture of isopentenyl diphosphate (IPP) and dimethylallyl diphosphate (DMAPP). Acts in the terminal step of the DOXP/MEP pathway for isoprenoid precursor biosynthesis. The polypeptide is 4-hydroxy-3-methylbut-2-enyl diphosphate reductase (Colwellia psychrerythraea (strain 34H / ATCC BAA-681) (Vibrio psychroerythus)).